We begin with the raw amino-acid sequence, 513 residues long: Putative ribose/galactose/methyl galactoside import ATP-binding protein 2 (513 aa).

2 ABC transporter domains span residues 24–260 (LTAE…VGRE) and 270–510 (VPIG…VMEL). Position 56–63 (56–63 (GENGAGKS)) interacts with ATP.

This sequence belongs to the ABC transporter superfamily. Carbohydrate importer 2 (CUT2) (TC 3.A.1.2) family.

The protein localises to the cell inner membrane. It carries out the reaction D-ribose(out) + ATP + H2O = D-ribose(in) + ADP + phosphate + H(+). The enzyme catalyses D-galactose(out) + ATP + H2O = D-galactose(in) + ADP + phosphate + H(+). Functionally, part of an ABC transporter complex involved in carbohydrate import. Could be involved in ribose, galactose and/or methyl galactoside import. Responsible for energy coupling to the transport system. This is Putative ribose/galactose/methyl galactoside import ATP-binding protein 2 from Rhizobium meliloti (strain 1021) (Ensifer meliloti).